The chain runs to 137 residues: uncharacterized protein (137 aa).

The HTH merR-type domain occupies 4–73; the sequence is MLTVSEVARK…LEEIADILHL (70 aa). Residues 8 to 27 constitute a DNA-binding region (H-T-H motif); sequence SEVARKLGLNPQTLYFYERI.

This is an uncharacterized protein from Synechocystis sp. (strain ATCC 27184 / PCC 6803 / Kazusa).